Consider the following 313-residue polypeptide: Ras-related GTP-binding protein A (313 aa).

Residues S16, G17, G19, K20, T21, S22, T36, T42, G65, and H127 each contribute to the GTP site. The GDP site is built by G17, G19, K20, T21, and S22. Positions 127 and 130 each coordinate GDP. Residue K142 forms a Glycyl lysine isopeptide (Lys-Gly) (interchain with G-Cter in ubiquitin) linkage. The GDP site is built by L148 and I164. A GTP-binding site is contributed by I164. Residues K220, K230, and K244 each participate in a glycyl lysine isopeptide (Lys-Gly) (interchain with G-Cter in ubiquitin) cross-link. Position 309 is a phosphoserine (S309).

It belongs to the GTR/RAG GTP-binding protein family. Can occur as a homodimer or as a heterodimer with RRAGC or RRAGD in a sequence-independent manner; heterodimerization stabilizes proteins of the heterodimer. The GTP-bound form of RRAGA (in complex with the GDP-bound form of RRAGC or RRAGD) interacts with RPTOR, thereby promoting recruitment of mTORC1 to the lysosomes. The Rag heterodimer interacts with SLC38A9; the probable amino acid sensor. The Rag heterodimer interacts with the Ragulator complex. The GTP-bound form of RRAGA interacts with NOL8. Component of the lysosomal folliculin complex (LFC), composed of FLCN, FNIP1 (or FNIP2), RagA/RRAGA or RagB/RRAGB GDP-bound, RagC/RRAGC or RagD/RRAGD GTP-bound, and Ragulator. Interacts with SH3BP4; the interaction with this negative regulator is most probably direct, preferentially occurs with the inactive GDP-bound form of RRAGA and is negatively regulated by amino acids. Interacts (polyubiquitinated) with TSC2. Interacts with SESN1, SESN2 and SESN3. Interacts with PIP4P1. Interacts with GPR137B. Interacts with WDR83; this interaction regulates the spatiotemporal localization of mTORC1 to the lysosomal surface. In terms of processing, polybiquitinated via 'Lys-63'-linked polyubiquitination by RNF152 in response to amino acid starvation: polyubiquitination of the GDP-bound inactive form by RNF152 promotes RRAGA inactivation and interaction with the GATOR1 complex. This does not affect RRAGA degradation.

It localises to the cytoplasm. Its subcellular location is the nucleus. The protein localises to the lysosome membrane. The catalysed reaction is GTP + H2O = GDP + phosphate + H(+). The activation of GTP-binding proteins is generally mediated by a guanine exchange factor (GEF), while inactivation through hydrolysis of bound GTP is catalyzed by a GTPase activating protein (GAP). The Ragulator complex functions as a GEF and promotes the active GTP-bound form. The GATOR1 complex functions as a GAP and stimulates RRAGA GTPase activity to turn it into its inactive GDP-bound form, preventing mTORC1 recruitment and activation. Functionally, guanine nucleotide-binding protein that plays a crucial role in the cellular response to amino acid availability through regulation of the mTORC1 signaling cascade. Forms heterodimeric Rag complexes with RagC/RRAGC or RagD/RRAGD and cycles between an inactive GDP-bound and an active GTP-bound form: RagA/RRAGA is in its active form when GTP-bound RagA/RRAGA forms a complex with GDP-bound RagC/RRAGC (or RagD/RRAGD) and in an inactive form when GDP-bound RagA/RRAGA heterodimerizes with GTP-bound RagC/RRAGC (or RagD/RRAGD). In its GTP-bound active form, promotes the recruitment of mTORC1 to the lysosomes and its subsequent activation by the GTPase RHEB. Involved in the RCC1/Ran-GTPase pathway. May play a direct role in a TNF-alpha signaling pathway leading to induction of cell death. The chain is Ras-related GTP-binding protein A from Bos taurus (Bovine).